The following is a 147-amino-acid chain: Hordoindoline-B1 (147 aa).

A signal peptide spans 1–19 (MKTLFLLAILALVASTTFA). Residues 20–28 (QYSVGGGYN) constitute a propeptide that is removed on maturation.

Five disulfide bonds are present. In terms of tissue distribution, found in endosperm and aleurone layer of developing kernels, but not in the embryo.

It localises to the membrane. Its subcellular location is the secreted. It is found in the extracellular space. Its function is as follows. Acts as a membranotoxin, probably through its antibacterial and antifungal activities, contributing to the defense mechanism of the plant against predators. Forms monovalent cation-selective ion channels in membranes. Contributes to grain texture and hardness. The polypeptide is Hordoindoline-B1 (HINB-1) (Hordeum vulgare (Barley)).